Consider the following 244-residue polypeptide: Venom nerve growth factor 1 (244 aa).

Positions 1 to 18 (MSMLCYTLIIAFLIGIWA) are cleaved as a signal peptide. Positions 19-125 (APKSEDNVPL…TLNRNIRAKR (107 aa)) are excised as a propeptide. Positions 47-66 (GLKTSRNTDQRHPAPKKAED) are enriched in basic and acidic residues. Positions 47–67 (GLKTSRNTDQRHPAPKKAEDQ) are disordered. 3 disulfide bridges follow: Cys139/Cys205, Cys181/Cys233, and Cys193/Cys235.

Belongs to the NGF-beta family. Homodimer; non-covalently linked. Expressed by the venom gland.

The protein resides in the secreted. In terms of biological role, nerve growth factor is important for the development and maintenance of the sympathetic and sensory nervous systems. It stimulates division and differentiation of sympathetic and embryonic sensory neurons as well as basal forebrain cholinergic neurons in the brain. Its relevance in the snake venom is not clear. However, it has been shown to inhibit metalloproteinase-dependent proteolysis of platelet glycoprotein Ib alpha, suggesting a metalloproteinase inhibition to prevent metalloprotease autodigestion and/or protection against prey proteases. Binds a lipid between the two protein chains in the homodimer. The lipid-bound form promotes histamine relase from mouse mast cells, contrary to the lipid-free form. The sequence is that of Venom nerve growth factor 1 from Notechis scutatus scutatus (Mainland tiger snake).